A 392-amino-acid chain; its full sequence is Putative 8-amino-7-oxononanoate synthase (392 aa).

Position 22 (Arg-22) interacts with substrate. 109-110 (GW) provides a ligand contact to pyridoxal 5'-phosphate. Substrate is bound at residue His-139. Pyridoxal 5'-phosphate-binding positions include Ser-187, 212 to 215 (DEAH), and 239 to 242 (TFSK). N6-(pyridoxal phosphate)lysine is present on Lys-242. Thr-356 is a substrate binding site.

This sequence belongs to the class-II pyridoxal-phosphate-dependent aminotransferase family. BioF subfamily. Homodimer. The cofactor is pyridoxal 5'-phosphate.

The catalysed reaction is 6-carboxyhexanoyl-[ACP] + L-alanine + H(+) = (8S)-8-amino-7-oxononanoate + holo-[ACP] + CO2. Its pathway is cofactor biosynthesis; biotin biosynthesis. Its function is as follows. Catalyzes the decarboxylative condensation of pimeloyl-[acyl-carrier protein] and L-alanine to produce 8-amino-7-oxononanoate (AON), [acyl-carrier protein], and carbon dioxide. The protein is Putative 8-amino-7-oxononanoate synthase (bioF) of Paramagnetospirillum magneticum (strain ATCC 700264 / AMB-1) (Magnetospirillum magneticum).